Consider the following 123-residue polypeptide: Histone H2B (123 aa).

Residues 1–32 form a disordered region; sequence MPPKAASKGAKKAASKAKAARSTDKKKRRRRR. The span at 9-32 shows a compositional bias: basic residues; the sequence is GAKKAASKAKAARSTDKKKRRRRR. O-linked (GlcNAc) serine glycosylation occurs at serine 110. A Glycyl lysine isopeptide (Lys-Gly) (interchain with G-Cter in ubiquitin) cross-link involves residue lysine 118.

This sequence belongs to the histone H2B family. The nucleosome is a histone octamer containing two molecules each of H2A, H2B, H3 and H4 assembled in one H3-H4 heterotetramer and two H2A-H2B heterodimers. The octamer wraps approximately 147 bp of DNA. Monoubiquitination of Lys-118 gives a specific tag for epigenetic transcriptional activation and is also prerequisite for histone H3 'Lys-4' and 'Lys-79' methylation.

It is found in the nucleus. The protein resides in the chromosome. Core component of nucleosome. Nucleosomes wrap and compact DNA into chromatin, limiting DNA accessibility to the cellular machineries which require DNA as a template. Histones thereby play a central role in transcription regulation, DNA repair, DNA replication and chromosomal stability. DNA accessibility is regulated via a complex set of post-translational modifications of histones, also called histone code, and nucleosome remodeling. This chain is Histone H2B, found in Urechis caupo (Innkeeper worm).